Here is a 340-residue protein sequence, read N- to C-terminus: 4-amino-5-hydroxymethyl-2-methylpyrimidine phosphate synthase THI13 (340 aa).

At lysine 62 the chain carries N6-(pyridoxal phosphate)lysine. Residue histidine 66 is part of the active site. A pyridoxal 5'-phosphate-binding site is contributed by 115–118 (GEFG). The CCCFC; essential for catalytic activity, may be the site of iron coordination motif lies at 195 to 199 (CCCFC).

This sequence belongs to the NMT1/THI5 family. As to quaternary structure, homodimer. Fe cation serves as cofactor.

The catalysed reaction is N(6)-(pyridoxal phosphate)-L-lysyl-[4-amino-5-hydroxymethyl-2-methylpyrimidine phosphate synthase] + L-histidyl-[4-amino-5-hydroxymethyl-2-methylpyrimidine phosphate synthase] + 2 Fe(3+) + 4 H2O = L-lysyl-[4-amino-5-hydroxymethyl-2-methylpyrimidine phosphate synthase] + (2S)-2-amino-5-hydroxy-4-oxopentanoyl-[4-amino-5-hydroxymethyl-2-methylpyrimidine phosphate synthase] + 4-amino-2-methyl-5-(phosphooxymethyl)pyrimidine + 3-oxopropanoate + 2 Fe(2+) + 2 H(+). It functions in the pathway cofactor biosynthesis; thiamine diphosphate biosynthesis. Responsible for the formation of the pyrimidine heterocycle in the thiamine biosynthesis pathway. Catalyzes the formation of hydroxymethylpyrimidine phosphate (HMP-P) from histidine and pyridoxal phosphate (PLP). The protein uses PLP and the active site histidine to form HMP-P, generating an inactive enzyme. The enzyme can only undergo a single turnover, which suggests it is a suicide enzyme. This Saccharomyces cerevisiae (strain ATCC 204508 / S288c) (Baker's yeast) protein is 4-amino-5-hydroxymethyl-2-methylpyrimidine phosphate synthase THI13.